Here is a 650-residue protein sequence, read N- to C-terminus: Probable basic-leucine zipper transcription factor K (650 aa).

The stretch at 37-180 (IDNNNNNYSN…KQQKQQQQEQ (144 aa)) forms a coiled coil. Disordered stretches follow at residues 109-130 (IPQQQQQEQDQQEDQDQEQEQE) and 242-279 (TTLNTNLQSDNNNNNNNNNNNNNNNNNNNNNNNNNNNL). Positions 118-129 (DQQEDQDQEQEQ) are enriched in acidic residues. The span at 242 to 251 (TTLNTNLQSD) shows a compositional bias: polar residues. The segment covering 252 to 278 (NNNNNNNNNNNNNNNNNNNNNNNNNNN) has biased composition (low complexity). Residues 259–286 (NNNNNNNNNNNNNNNNNNNNLLNEKQIE) adopt a coiled-coil conformation. One can recognise a bZIP domain in the interval 305–368 (FNKIEKGKRN…IEIMRSEPES (64 aa)). The basic motif stretch occupies residues 307–327 (KIEKGKRNQTESSKNFRERKK). The interval 330–337 (IKDIELKL) is leucine-zipper. Low complexity predominate over residues 452–466 (NNNNNNNNNNNNNNN). Residues 452 to 473 (NNNNNNNNNNNNNNNDNDDDNE) are disordered.

This sequence belongs to the bZIP family.

The protein resides in the nucleus. Functionally, probable transcriptional regulator. The protein is Probable basic-leucine zipper transcription factor K (bzpK) of Dictyostelium discoideum (Social amoeba).